Consider the following 382-residue polypeptide: Pyrimidine monooxygenase RutA (382 aa).

Residues 68 to 69 (IK), Asn134, Glu143, 159 to 160 (RY), and Ser209 each bind FMN.

This sequence belongs to the NtaA/SnaA/DszA monooxygenase family. RutA subfamily.

The catalysed reaction is uracil + FMNH2 + NADH + O2 = (Z)-3-ureidoacrylate + FMN + NAD(+) + H2O + H(+). The enzyme catalyses thymine + FMNH2 + NADH + O2 = (Z)-2-methylureidoacrylate + FMN + NAD(+) + H2O + H(+). Functionally, catalyzes the pyrimidine ring opening between N-3 and C-4 by an unusual flavin hydroperoxide-catalyzed mechanism, adding oxygen atoms in the process to yield ureidoacrylate peracid, that immediately reacts with FMN forming ureidoacrylate and FMN-N(5)-oxide. The FMN-N(5)-oxide reacts spontaneously with NADH to produce FMN. Requires the flavin reductase RutF to regenerate FMN in vivo. The polypeptide is Pyrimidine monooxygenase RutA (Escherichia coli (strain B / BL21-DE3)).